A 116-amino-acid polypeptide reads, in one-letter code: Iron-sulfur cluster insertion protein ErpA (116 aa).

Residues Cys-44, Cys-108, and Cys-110 each contribute to the iron-sulfur cluster site.

The protein belongs to the HesB/IscA family. As to quaternary structure, homodimer. Iron-sulfur cluster is required as a cofactor.

Required for insertion of 4Fe-4S clusters for at least IspG. The chain is Iron-sulfur cluster insertion protein ErpA from Shewanella loihica (strain ATCC BAA-1088 / PV-4).